The following is a 182-amino-acid chain: Thioredoxin F-type, chloroplastic (182 aa).

Residues 1-22 (MPLSLRLAPSPTALSPTTGGFS) are disordered. The Thioredoxin domain occupies 52-177 (KRGDSSVVRC…LVAAIETARS (126 aa)). Residues Cys102 and Cys105 each act as nucleophile in the active site. Cys102 and Cys105 are oxidised to a cystine.

Belongs to the thioredoxin family. Plant F-type subfamily. In terms of assembly, forms a complex with heterodimeric ferredoxin-thioredoxin reductase (FTR) and ferredoxin.

It localises to the plastid. Its subcellular location is the chloroplast. Participates in various redox reactions through the reversible oxidation of the active center dithiol to a disulfide. The F form is known to activate a number of enzymes of the photosynthetic carbon cycle. The protein is Thioredoxin F-type, chloroplastic (TRXF) of Brassica napus (Rape).